Here is a 188-residue protein sequence, read N- to C-terminus: Putative manganese efflux pump MntP (188 aa).

A run of 6 helical transmembrane segments spans residues 2-22 (IMGN…AFAV), 39-59 (LITG…GFLL), 67-87 (ITAI…LNMI), 107-127 (IILS…FAFL), 129-149 (VDIV…SFLG), and 166-186 (LAGG…HLGF).

Belongs to the MntP (TC 9.B.29) family.

It is found in the cell membrane. Its function is as follows. Probably functions as a manganese efflux pump. The polypeptide is Putative manganese efflux pump MntP (Desulfitobacterium hafniense (strain Y51)).